The primary structure comprises 1405 residues: DNA-directed RNA polymerase subunit beta' (1405 aa).

Residues Cys-70, Cys-72, Cys-85, and Cys-88 each coordinate Zn(2+). Positions 460, 462, and 464 each coordinate Mg(2+). The Zn(2+) site is built by Cys-814, Cys-888, Cys-895, and Cys-898.

It belongs to the RNA polymerase beta' chain family. In terms of assembly, the RNAP catalytic core consists of 2 alpha, 1 beta, 1 beta' and 1 omega subunit. When a sigma factor is associated with the core the holoenzyme is formed, which can initiate transcription. Mg(2+) is required as a cofactor. It depends on Zn(2+) as a cofactor.

The catalysed reaction is RNA(n) + a ribonucleoside 5'-triphosphate = RNA(n+1) + diphosphate. Functionally, DNA-dependent RNA polymerase catalyzes the transcription of DNA into RNA using the four ribonucleoside triphosphates as substrates. The sequence is that of DNA-directed RNA polymerase subunit beta' from Shewanella putrefaciens (strain CN-32 / ATCC BAA-453).